The primary structure comprises 307 residues: Replication termination factor 2 (307 aa).

The segment at 193–296 (AKLEKKTKKP…SSAKRSKEES (104 aa)) is disordered. The segment covering 227–241 (GKPEEADPDPREKKS) has biased composition (basic and acidic residues). The residue at position 288 (Ser-288) is a Phosphoserine.

This sequence belongs to the rtf2 family. In terms of assembly, interacts with DDI2; probably also interacts with DDI1. In terms of processing, undergoes proteasomal degradation, via DDI1 and DDI2. Removal from stalled replisomes and degradation are required for genome stability.

It localises to the chromosome. Its function is as follows. Replication termination factor which is a component of the elongating replisome. Required for ATR pathway signaling upon DNA damage and has a positive activity during DNA replication. Might function to facilitate fork pausing at replication fork barriers like the rDNA. May be globally required to stimulate ATR signaling after the fork stalls or encounters a lesion. Interacts with nascent DNA. The polypeptide is Replication termination factor 2 (Mus musculus (Mouse)).